The chain runs to 253 residues: Imidazole glycerol phosphate synthase subunit HisF (253 aa).

Active-site residues include D11 and D130.

Belongs to the HisA/HisF family. Heterodimer of HisH and HisF.

It localises to the cytoplasm. It catalyses the reaction 5-[(5-phospho-1-deoxy-D-ribulos-1-ylimino)methylamino]-1-(5-phospho-beta-D-ribosyl)imidazole-4-carboxamide + L-glutamine = D-erythro-1-(imidazol-4-yl)glycerol 3-phosphate + 5-amino-1-(5-phospho-beta-D-ribosyl)imidazole-4-carboxamide + L-glutamate + H(+). Its pathway is amino-acid biosynthesis; L-histidine biosynthesis; L-histidine from 5-phospho-alpha-D-ribose 1-diphosphate: step 5/9. Its function is as follows. IGPS catalyzes the conversion of PRFAR and glutamine to IGP, AICAR and glutamate. The HisF subunit catalyzes the cyclization activity that produces IGP and AICAR from PRFAR using the ammonia provided by the HisH subunit. This is Imidazole glycerol phosphate synthase subunit HisF from Methylibium petroleiphilum (strain ATCC BAA-1232 / LMG 22953 / PM1).